The chain runs to 264 residues: Ribonuclease HII (264 aa).

Residues 69-263 enclose the RNase H type-2 domain; it reads KVVCGIDEVG…EENAKTITKP (195 aa). A divalent metal cation-binding residues include aspartate 75, glutamate 76, and aspartate 166.

The protein belongs to the RNase HII family. It depends on Mn(2+) as a cofactor. The cofactor is Mg(2+).

The protein resides in the cytoplasm. It catalyses the reaction Endonucleolytic cleavage to 5'-phosphomonoester.. Functionally, endonuclease that specifically degrades the RNA of RNA-DNA hybrids. This Macrococcus caseolyticus (strain JCSC5402) (Macrococcoides caseolyticum) protein is Ribonuclease HII.